A 587-amino-acid chain; its full sequence is Ankyrin repeat and SOCS box protein 14 (587 aa).

11 ANK repeats span residues N81–W110, N116–A145, E149–L178, N182–A211, Y215–S244, D248–I277, S281–I310, S313–F342, Q355–Q384, D385–Y414, and C416–R449. The SOCS box domain maps to W521 to D576.

The protein belongs to the ankyrin SOCS box (ASB) family. In terms of assembly, interacts with MAPRE2; this interaction promotes MAPRE2 degradation.

The protein operates within protein modification; protein ubiquitination. Its function is as follows. May be a substrate-recognition component of a SCF-like ECS (Elongin-Cullin-SOCS-box protein) E3 ubiquitin-protein ligase complex which mediates the ubiquitination and subsequent proteasomal degradation of target proteins. Plays a role in the inhibition of cardiomyocyte nuclear proliferation by mediating the ubiquitination and degradation of MAPRE2. The polypeptide is Ankyrin repeat and SOCS box protein 14 (Asb14) (Mus musculus (Mouse)).